We begin with the raw amino-acid sequence, 111 residues long: Dynein light chain Tctex-type (111 aa).

Belongs to the dynein light chain Tctex-type family.

Its subcellular location is the cytoplasm. It is found in the cytoskeleton. Its function is as follows. Acts as a non-catalytic accessory component of a dynein complex. This chain is Dynein light chain Tctex-type (dlcA), found in Dictyostelium discoideum (Social amoeba).